A 460-amino-acid chain; its full sequence is MSHYAIILAAGKGTRMKSDLPKVLHKVSGITMLEHVFRAVSVIEPAKNVTVIGHKAELVREVLDGQSAFTMQTEQLGTGHAVMMAEEELAGLEGQTLVIAGDTPLITGESLKNLIDFHVNHKNVATILTATADNPFGYGRIIRNENGEVTKIVEQKDANEFEQQVKEINTGTYVFDNKRLFEALKNINTNNAQGEYYLTDVISIFRENGEKVGAYTLRDFEESLGVNDRVALATAEDVMRRRINKAHMINGVTFQNPNATYIDVDVEIAPDVVIEANVTLKGQTKVGAESVLTNGTYIVDSTIGANTVITNSMIEHSVVEKGATVGPFAHIRPDSMLKEGVHIGNFVEVKGSTIGENTKAGHLTYIGNAEVGSDVNFGAGTITVNYDGQHKFKTQIANNAFIGSNSTLIAPLEIGDNALTAAGSTITDNVPADSVAIGRSRQVNKEGYAIKKPHHPSQQK.

The segment at 1 to 229 (MSHYAIILAA…FEESLGVNDR (229 aa)) is pyrophosphorylase. Residues 8–11 (LAAG), Lys-22, Gln-72, and 77–78 (GT) each bind UDP-N-acetyl-alpha-D-glucosamine. A Mg(2+)-binding site is contributed by Asp-102. Residues Gly-139, Glu-154, Asn-169, and Asn-227 each contribute to the UDP-N-acetyl-alpha-D-glucosamine site. Asn-227 contacts Mg(2+). The interval 230-250 (VALATAEDVMRRRINKAHMIN) is linker. Residues 251–460 (GVTFQNPNAT…KKPHHPSQQK (210 aa)) form an N-acetyltransferase region. Positions 332 and 350 each coordinate UDP-N-acetyl-alpha-D-glucosamine. His-362 serves as the catalytic Proton acceptor. 2 residues coordinate UDP-N-acetyl-alpha-D-glucosamine: Tyr-365 and Asn-376. Acetyl-CoA contacts are provided by residues Ala-379, 385-386 (NY), Ser-404, Ala-422, and Arg-439.

The protein in the N-terminal section; belongs to the N-acetylglucosamine-1-phosphate uridyltransferase family. This sequence in the C-terminal section; belongs to the transferase hexapeptide repeat family. In terms of assembly, homotrimer. Mg(2+) is required as a cofactor.

The protein resides in the cytoplasm. The enzyme catalyses alpha-D-glucosamine 1-phosphate + acetyl-CoA = N-acetyl-alpha-D-glucosamine 1-phosphate + CoA + H(+). It catalyses the reaction N-acetyl-alpha-D-glucosamine 1-phosphate + UTP + H(+) = UDP-N-acetyl-alpha-D-glucosamine + diphosphate. Its pathway is nucleotide-sugar biosynthesis; UDP-N-acetyl-alpha-D-glucosamine biosynthesis; N-acetyl-alpha-D-glucosamine 1-phosphate from alpha-D-glucosamine 6-phosphate (route II): step 2/2. It functions in the pathway nucleotide-sugar biosynthesis; UDP-N-acetyl-alpha-D-glucosamine biosynthesis; UDP-N-acetyl-alpha-D-glucosamine from N-acetyl-alpha-D-glucosamine 1-phosphate: step 1/1. It participates in bacterial outer membrane biogenesis; LPS lipid A biosynthesis. Its function is as follows. Catalyzes the last two sequential reactions in the de novo biosynthetic pathway for UDP-N-acetylglucosamine (UDP-GlcNAc). The C-terminal domain catalyzes the transfer of acetyl group from acetyl coenzyme A to glucosamine-1-phosphate (GlcN-1-P) to produce N-acetylglucosamine-1-phosphate (GlcNAc-1-P), which is converted into UDP-GlcNAc by the transfer of uridine 5-monophosphate (from uridine 5-triphosphate), a reaction catalyzed by the N-terminal domain. The sequence is that of Bifunctional protein GlmU from Streptococcus thermophilus (strain CNRZ 1066).